The primary structure comprises 347 residues: MLTNPSQVIIRNQDSLNQHKVLVLNHEADLLPKALLDVAASVDALALDYHHYLHLVPHANSKLRCYFGHELPHQDPIKPEKYDTVIVYFPKAKPLAPYLFTLAANHLVPNGQLLVVGENKGGIKSLVKLLPEYFATGMKLDNARHCLLFGSNLEGRAPAMKLSDWVSQYQLSTPQGEISICNLVGVFSEKRLDQGTELLLSHLPTLSGRVLDFGCGAGVIAAALLKAQPHLSLECIDINAMALASCELTLAANGMTAKVYPSDGLAQTTGKFNGIISNPPFHDGLTSTTNIAKNFVTDSAKQLQHNGIWQIVANRHLPYSDIIAAEFGQLTVPAENNKYKLYYFQQQ.

It belongs to the methyltransferase superfamily. RsmC family. Monomer.

Its subcellular location is the cytoplasm. The catalysed reaction is guanosine(1207) in 16S rRNA + S-adenosyl-L-methionine = N(2)-methylguanosine(1207) in 16S rRNA + S-adenosyl-L-homocysteine + H(+). Its function is as follows. Specifically methylates the guanine in position 1207 of 16S rRNA in the 30S particle. This chain is Ribosomal RNA small subunit methyltransferase C, found in Shewanella putrefaciens (strain CN-32 / ATCC BAA-453).